A 197-amino-acid polypeptide reads, in one-letter code: MQPAALESLINALRVLPGVGPKSAARMAYHLLQRDRRGAETLAGALGHALTHLHHCRLCNNFSEAEVCEVCASTRRDRRQLAVVEMPADFNMMEATQSYNGLYFVLMGRLSPLDGIGPREIHLDRLINRALDGTVEEVILATNFTPEGEATAHTIGELLKARGLKVSRLARGVPVGGELEYVDSGTLAQAVRDRRAL.

The C4-type zinc-finger motif lies at 56–71 (CRLCNNFSEAEVCEVC). Positions 79–174 (RQLAVVEMPA…KVSRLARGVP (96 aa)) constitute a Toprim domain.

The protein belongs to the RecR family.

Functionally, may play a role in DNA repair. It seems to be involved in an RecBC-independent recombinational process of DNA repair. It may act with RecF and RecO. In Thiobacillus denitrificans (strain ATCC 25259 / T1), this protein is Recombination protein RecR.